A 321-amino-acid chain; its full sequence is Porphobilinogen deaminase (321 aa).

Cys-246 carries the S-(dipyrrolylmethanemethyl)cysteine modification.

This sequence belongs to the HMBS family. Monomer. The cofactor is dipyrromethane.

It catalyses the reaction 4 porphobilinogen + H2O = hydroxymethylbilane + 4 NH4(+). It participates in porphyrin-containing compound metabolism; protoporphyrin-IX biosynthesis; coproporphyrinogen-III from 5-aminolevulinate: step 2/4. Functionally, tetrapolymerization of the monopyrrole PBG into the hydroxymethylbilane pre-uroporphyrinogen in several discrete steps. This chain is Porphobilinogen deaminase, found in Helicobacter hepaticus (strain ATCC 51449 / 3B1).